The chain runs to 1045 residues: FERM, ARHGEF and pleckstrin domain-containing protein 1 (1045 aa).

The segment at 1 to 37 (MGEIEQRPTPGSRLGAPENSGISTLERGQKPPPTPSG) is disordered. 2 positions are modified to phosphoserine: Ser20 and Ser23. Thr24 carries the post-translational modification Phosphothreonine. The region spanning 40–320 (VSIKIQMLDD…EHHAFFRLFE (281 aa)) is the FERM domain. Phosphoserine occurs at positions 340, 373, 389, 403, 418, 427, and 433. The tract at residues 392–534 (SASLTFGEGA…TDDEDEGRRK (143 aa)) is disordered. Composition is skewed to polar residues over residues 471–489 (TGSLTGSPHLSELSVNSQG) and 496–511 (VTLSPNLSPDTKQASP). Ser510 and Ser514 each carry phosphoserine. Positions 540–730 (KAYFIAKEVS…TEMVAQLHGT (191 aa)) constitute a DH domain. In terms of domain architecture, PH 1 spans 759 to 856 (EFIRLGSLSK…WVEDIQMAID (98 aa)). Phosphoserine occurs at positions 833, 872, and 878. Residues 866 to 902 (PEFLASSPPDNKSPDEATAADQESEDDLSASRTSLER) form a disordered region. Thr883 carries the post-translational modification Phosphothreonine. Phosphoserine occurs at positions 889, 896, and 899. The 98-residue stretch at 932–1029 (ENQLSGNLLR…WMEVIRSATS (98 aa)) folds into the PH 2 domain.

In terms of assembly, interacts with CADM1. Interacts with RAC1.

It is found in the cell membrane. It localises to the synapse. Its subcellular location is the synaptosome. The protein localises to the cytoplasm. The protein resides in the cytosol. It is found in the cell projection. It localises to the filopodium. Its subcellular location is the dendrite. The protein localises to the dendritic spine. Its function is as follows. Functions as a guanine nucleotide exchange factor for RAC1. May play a role in semaphorin signaling. Plays a role in the assembly and disassembly of dendritic filopodia, the formation of dendritic spines, regulation of dendrite length and ultimately the formation of synapses. The chain is FERM, ARHGEF and pleckstrin domain-containing protein 1 (FARP1) from Pongo abelii (Sumatran orangutan).